The following is a 21-amino-acid chain: Protein YliM (21 aa).

The protein is Protein YliM of Escherichia coli (strain K12).